Here is a 440-residue protein sequence, read N- to C-terminus: Oligodendrocyte-myelin glycoprotein (440 aa).

The first 24 residues, 1-24, serve as a signal peptide directing secretion; the sequence is MEYQILKMSSCLFILLFLTPGILC. The 31-residue stretch at 25–55 folds into the LRRNT domain; it reads ICPLQCTCTERHRHVDCSGRNLTTLPPGLQE. Asparagine 45 and asparagine 61 each carry an N-linked (GlcNAc...) asparagine glycan. 8 LRR repeats span residues 56 to 78, 79 to 100, 101 to 121, 124 to 145, 147 to 168, 169 to 189, 192 to 213, and 216 to 239; these read NIIH…TPYT, NLRT…LPRS, LWNM…DTAY, NLKY…KNTL, SLEV…MPSK, LHIV…TLIN, NLTH…SFDQ, and QLQE…TYLL. Asparagine 103 carries an N-linked (GlcNAc...) asparagine glycan. Residues asparagine 152, asparagine 176, asparagine 189, asparagine 192, and asparagine 234 are each glycosylated (N-linked (GlcNAc...) asparagine). Ser/Thr-rich repeat units lie at residues 229-270, 271-292, 293-335, 336-377, and 378-416; these read CDHK…YPTP, PGFT…INSL, SMVT…VAYP, EDTP…PPSP, and VTLS…TRPP. N-linked (GlcNAc...) asparagine glycans are attached at residues asparagine 364 and asparagine 389. Residue serine 417 is the site of GPI-anchor amidated serine attachment. Residues 418–440 constitute a propeptide, removed in mature form; that stretch reads AASAWKVNASLLLMLNAVVMLAG. N-linked (GlcNAc...) asparagine glycosylation is present at asparagine 425.

As to quaternary structure, binds to RTN4R. O-glycosylated in its Ser/Thr-rich repeat domain. Oligodendrocytes and myelin of the central nervous system.

Its subcellular location is the cell membrane. Cell adhesion molecule contributing to the interactive process required for myelination in the central nervous system. The protein is Oligodendrocyte-myelin glycoprotein (Omg) of Mus musculus (Mouse).